We begin with the raw amino-acid sequence, 640 residues long: Threonine--tRNA ligase (640 aa).

The region spanning 1 to 61 is the TGS domain; the sequence is MPVVTLPDGS…DKDSHLAIIT (61 aa). Residues 242 to 533 are catalytic; sequence DHRRLGKQLD…LIENHAGNMP (292 aa). Residues C333, H384, and H510 each contribute to the Zn(2+) site.

This sequence belongs to the class-II aminoacyl-tRNA synthetase family. In terms of assembly, homodimer. Requires Zn(2+) as cofactor.

It is found in the cytoplasm. The catalysed reaction is tRNA(Thr) + L-threonine + ATP = L-threonyl-tRNA(Thr) + AMP + diphosphate + H(+). Its function is as follows. Catalyzes the attachment of threonine to tRNA(Thr) in a two-step reaction: L-threonine is first activated by ATP to form Thr-AMP and then transferred to the acceptor end of tRNA(Thr). Also edits incorrectly charged L-seryl-tRNA(Thr). The chain is Threonine--tRNA ligase from Polynucleobacter asymbioticus (strain DSM 18221 / CIP 109841 / QLW-P1DMWA-1) (Polynucleobacter necessarius subsp. asymbioticus).